The chain runs to 505 residues: Maturase K (505 aa).

The protein belongs to the intron maturase 2 family. MatK subfamily.

It localises to the plastid. It is found in the chloroplast. Functionally, usually encoded in the trnK tRNA gene intron. Probably assists in splicing its own and other chloroplast group II introns. The polypeptide is Maturase K (Gomphrena haageana (Haage's globe-amaranth)).